Consider the following 147-residue polypeptide: Hemoglobin subunit gamma (147 aa).

Residues D3–H147 enclose the Globin domain. Positions 64 and 93 each coordinate heme b.

The protein belongs to the globin family. As to quaternary structure, heterotetramer of two alpha chains and two gamma chains in fetal hemoglobin (Hb F). In terms of tissue distribution, red blood cells.

In terms of biological role, gamma chains make up the fetal hemoglobin F, in combination with alpha chains. This Trichechus manatus (Caribbean manatee) protein is Hemoglobin subunit gamma (HBG).